The primary structure comprises 1732 residues: Lys-gingipain W83 (1732 aa).

The N-terminal stretch at 1 to 24 (MRKLLLLIAASLLGVGLYAQSAKI) is a signal peptide. Positions 25–228 (KLDAPTTRTT…ETAYKQLFNR (204 aa)) are excised as a propeptide. D313, D337, D339, F341, and E343 together coordinate Ca(2+). The active-site Proton donor is the H444. The active-site Nucleophile is C477. Ca(2+) is bound by residues F482 and E491. Residues 965 to 988 (DAPNGTPNPNPNPNPNPGTTLSES) are disordered. Over residues 970–980 (TPNPNPNPNPN) the composition is skewed to pro residues. S988, E990, D1001, D1003, D1005, H1007, S1022, G1024, N1043, D1146, E1147, D1433, E1435, D1446, D1448, D1450, N1452, S1470, I1472, N1490, and D1595 together coordinate Ca(2+).

The protein belongs to the peptidase C25 family. Post-translationally, proteolytically cleaved into a catalytic subunit and three adhesins. Arg-gingipain is involved in this post-translational processing.

It is found in the secreted. The catalysed reaction is Endopeptidase with strict specificity for lysyl bonds.. Its function is as follows. Cysteine proteinase with a strong preference for substrates with Lys in the P1 position. Hydrolyzes bovine hemoglobin, bovine serum albumin, casein, human placental type I collagen and human IgA and IgG. Disrupts the functions of polymorphonuclear leukocytes. May act as a virulence factor in the development of peridontal disease. Involved in the coaggregation of P.gingivalis with other oral bacteria. Has hemolytic activity; this is mediated by the adhesin domains and does not require the catalytic domain. This is Lys-gingipain W83 from Porphyromonas gingivalis (Bacteroides gingivalis).